A 54-amino-acid polypeptide reads, in one-letter code: Large ribosomal subunit protein bL32c (54 aa).

The protein belongs to the bacterial ribosomal protein bL32 family.

The protein localises to the plastid. The protein resides in the chloroplast. This is Large ribosomal subunit protein bL32c from Piper cenocladum (Ant piper).